A 132-amino-acid chain; its full sequence is Small ribosomal subunit protein uS8 (132 aa).

The protein belongs to the universal ribosomal protein uS8 family. As to quaternary structure, part of the 30S ribosomal subunit. Contacts proteins S5 and S12.

In terms of biological role, one of the primary rRNA binding proteins, it binds directly to 16S rRNA central domain where it helps coordinate assembly of the platform of the 30S subunit. The sequence is that of Small ribosomal subunit protein uS8 from Enterococcus faecalis (strain ATCC 700802 / V583).